The sequence spans 422 residues: Glyceraldehyde-3-phosphate dehydrogenase GAPCP1, chloroplastic (422 aa).

The N-terminal 69 residues, 1–69, are a transit peptide targeting the chloroplast; it reads MAFSSLLRSA…NARSVQPIKA (69 aa). Residues 50 to 63 are compositionally biased toward polar residues; the sequence is SGISSSLQNGNARS. A disordered region spans residues 50–84; the sequence is SGISSSLQNGNARSVQPIKATATEVPSAVRRSSSS. T70 carries the N-acetylthreonine modification. NAD(+) contacts are provided by residues 96-97, D118, and R164; that span reads RI. D-glyceraldehyde 3-phosphate is bound by residues 235–237, T266, 295–296, and R318; these read SCT and TG. The active-site Nucleophile is the C236. N400 contributes to the NAD(+) binding site.

This sequence belongs to the glyceraldehyde-3-phosphate dehydrogenase family. In terms of assembly, homotetramer. Expressed in shoot and root vasculature, leaf veins and vascular tissue of flowers and siliques.

The protein resides in the plastid. The protein localises to the chloroplast stroma. The enzyme catalyses D-glyceraldehyde 3-phosphate + phosphate + NAD(+) = (2R)-3-phospho-glyceroyl phosphate + NADH + H(+). In terms of biological role, involved in plastidial glycolytic pathway and plays a specific role in glycolytic energy production in non-green plastids and chloroplasts. Essential for breakdown of starch to form sucrose for export to non-photosynthetic tissues, and to generate primary metabolites for anabolic pathways such as fatty acid and amino acid synthesis. Plays an important role in plant development by providing substrates for the phosphorylated pathway of serine biosynthesis in roots. Plays a crucial role in pollen development. Functionally redundant with GAPCP2. In Arabidopsis thaliana (Mouse-ear cress), this protein is Glyceraldehyde-3-phosphate dehydrogenase GAPCP1, chloroplastic (GAPCP1).